The chain runs to 504 residues: Maturase K (504 aa).

This sequence belongs to the intron maturase 2 family. MatK subfamily.

The protein resides in the plastid. It is found in the chloroplast. Its function is as follows. Usually encoded in the trnK tRNA gene intron. Probably assists in splicing its own and other chloroplast group II introns. This is Maturase K from Prionotes cerinthoides (Climbing heath).